The chain runs to 315 residues: Serine/threonine-protein phosphatase PP2A catalytic subunit 2 (315 aa).

Mn(2+)-binding residues include Asp-62, His-64, Asp-90, and Asn-122. Catalysis depends on His-123, which acts as the Proton donor. Positions 172 and 247 each coordinate Mn(2+). The interval 294-315 is disordered; it reads QFEPAPRENEPHTTRRVPDYFL. Positions 298–315 are enriched in basic and acidic residues; the sequence is APRENEPHTTRRVPDYFL. Leucine methyl ester is present on Leu-315.

This sequence belongs to the PPP phosphatase family. PP-2A subfamily. Requires Mn(2+) as cofactor. In terms of processing, reversibly methyl esterified on Leu-315 by leucine carboxyl methyltransferase 1 (PPM1) and protein phosphatase methylesterase 1 (PPE1). Carboxyl methylation influences the affinity of the catalytic subunit for the different regulatory subunits, thereby modulating the PP2A holoenzyme's substrate specificity, enzyme activity and cellular localization.

The catalysed reaction is O-phospho-L-seryl-[protein] + H2O = L-seryl-[protein] + phosphate. It catalyses the reaction O-phospho-L-threonyl-[protein] + H2O = L-threonyl-[protein] + phosphate. The chain is Serine/threonine-protein phosphatase PP2A catalytic subunit 2 (Ppn2) from Paramecium tetraurelia.